The sequence spans 760 residues: Catalase-peroxidase (760 aa).

The segment at 1 to 57 is disordered; the sequence is MTDSQDNRTPESPQGVDRKAEGGCPVLHDGVTAQGSESENPAIDSPTPRTGGRPNSL. The segment at residues 129-251 is a cross-link (tryptophyl-tyrosyl-methioninium (Trp-Tyr) (with M-277)); it reads WHAAGTYRIH…LGAVQMGLIY (123 aa). The active-site Proton acceptor is histidine 130. The segment at residues 251–277 is a cross-link (tryptophyl-tyrosyl-methioninium (Tyr-Met) (with W-129)); sequence YVNPEGPNGNPDPLASARDIRETFARM. Position 292 (histidine 292) interacts with heme b.

Belongs to the peroxidase family. Peroxidase/catalase subfamily. As to quaternary structure, homodimer or homotetramer. Heme b serves as cofactor. Post-translationally, formation of the three residue Trp-Tyr-Met cross-link is important for the catalase, but not the peroxidase activity of the enzyme.

The catalysed reaction is H2O2 + AH2 = A + 2 H2O. The enzyme catalyses 2 H2O2 = O2 + 2 H2O. Its function is as follows. Bifunctional enzyme with both catalase and broad-spectrum peroxidase activity. This is Catalase-peroxidase from Nocardioides sp. (strain ATCC BAA-499 / JS614).